A 327-amino-acid chain; its full sequence is Malate dehydrogenase (327 aa).

Position 11 to 17 (11 to 17) interacts with NAD(+); it reads GAAGNIS. Residues R92 and R98 each contribute to the substrate site. Residues N105, Q112, and 129–131 each bind NAD(+); that span reads VGN. Substrate-binding residues include N131 and R162. H187 (proton acceptor) is an active-site residue. The segment at 304–327 is disordered; that stretch reads SQEKMKATEQELSEERDAVEHLLP.

Belongs to the LDH/MDH superfamily. MDH type 2 family.

The enzyme catalyses (S)-malate + NAD(+) = oxaloacetate + NADH + H(+). In terms of biological role, catalyzes the reversible oxidation of malate to oxaloacetate. The sequence is that of Malate dehydrogenase from Psychrobacter sp. (strain PRwf-1).